The sequence spans 677 residues: Methionine--tRNA ligase (677 aa).

The 'HIGH' region signature appears at 15–25; sequence PYANGSIHLGH. Residues Cys-146, Cys-149, Cys-159, and Cys-162 each coordinate Zn(2+). The short motif at 333–337 is the 'KMSKS' region element; the sequence is KMSKS. Lys-336 is an ATP binding site. The region spanning 575–677 is the tRNA-binding domain; sequence DFAKVDLRVA…EGAKPGQQVK (103 aa).

Belongs to the class-I aminoacyl-tRNA synthetase family. MetG type 1 subfamily. In terms of assembly, homodimer. Requires Zn(2+) as cofactor.

The protein localises to the cytoplasm. The catalysed reaction is tRNA(Met) + L-methionine + ATP = L-methionyl-tRNA(Met) + AMP + diphosphate. Is required not only for elongation of protein synthesis but also for the initiation of all mRNA translation through initiator tRNA(fMet) aminoacylation. The protein is Methionine--tRNA ligase of Enterobacter sp. (strain 638).